Here is a 652-residue protein sequence, read N- to C-terminus: Sciellin (652 aa).

The span at 1 to 10 shows a compositional bias: basic residues; it reads MSNFSSRKKS. Disordered regions lie at residues 1–29 and 43–180; these read MSNF…QQGF and SWIK…KPLG. Over residues 66–95 the composition is skewed to basic and acidic residues; it reads NSHDALDRKLIERDEPKATISRYRSEDMLD. Lys82 is subject to N6-acetyllysine. The segment covering 97–110 has biased composition (polar residues); sequence TLSSFRTPQSTKTP. The span at 111–130 shows a compositional bias: low complexity; that stretch reads AVSSFNANTTATASTPATTP. Positions 161–170 are enriched in pro residues; the sequence is LHPPLPPKPC. 15 consecutive repeat copies span residues 207–226, 227–241, 242–261, 262–281, 282–301, 302–320, 321–340, 341–360, 361–380, 381–398, 399–418, 419–438, 439–458, 459–477, and 478–496. Residues 207 to 496 are 15 X approximate tandem repeats; sequence TEDLDDIIRV…VNSHVAEKNG (290 aa). A Phosphoserine modification is found at Ser264. Residue Ser343 is modified to Phosphoserine. The tract at residues 353 to 385 is disordered; it reads EVNRSNKGGPSLDNFTKGVPARSRANQRDQDLD. A disordered region spans residues 436-455; sequence NQRNHDVDSTIRGNPTGTRC. Over residues 446–455 the composition is skewed to polar residues; sequence IRGNPTGTRC. Residues 583–649 enclose the LIM zinc-binding domain; that stretch reads DMCTYCRKPL…EPCYSKVMAK (67 aa).

As to expression, expressed in the upper layers of stratified epithelia, including, ependyma and choroid plexus of the brain ventricles.

It is found in the cytoplasm. The protein resides in the membrane. Functionally, may function in the assembly or regulation of proteins in the cornified envelope. The LIM domain may be involved in homotypic or heterotypic associations and may function to localize sciellin to the cornified envelope. The chain is Sciellin (Scel) from Mus musculus (Mouse).